We begin with the raw amino-acid sequence, 1403 residues long: Nidogen-2 (1403 aa).

The signal sequence occupies residues 1-30; the sequence is MFRDPTAGWLTPPSPLSLLVMLLLLSRVGA. The 167-residue stretch at 108–274 folds into the NIDO domain; that stretch reads PFLADIDTSH…GVWAFHIGSR (167 aa). Residues 323–403 form a disordered region; the sequence is EDVEYPPVEP…KQGRPVGEGE (81 aa). Residues S386 and S475 are each glycosylated (O-linked (Xyl...) (chondroitin sulfate) serine). Residues 386 to 395 are compositionally biased toward polar residues; it reads SASLDPQTKQ. Positions 507–547 constitute an EGF-like 1 domain; the sequence is NLETCEHSHGRCSQHAFCTDYTTGFCCHCQSRFYGNGKHCL. 3 disulfides stabilise this stretch: C511–C524, C518–C533, and C535–C546. The Nidogen G2 beta-barrel domain maps to 551-781; sequence APHRVNGKVS…GPVEVDSAPV (231 aa). N681, N716, and N726 each carry an N-linked (GlcNAc...) asparagine glycan. The 42-residue stretch at 782 to 823 folds into the EGF-like 2 domain; it reads GVNPCYDGSHTCDTTARCHPGTGVDYTCECTPGFQGDGRSCV. 18 disulfides stabilise this stretch: C786/C799, C793/C809, C811/C822, C828/C841, C835/C850, C852/C865, C875/C890, C882/C900, C902/C913, C919/C930, C924/C939, C941/C952, C968/C991, C1002/C1009, C1011/C1033, C1047/C1071, C1082/C1089, and C1091/C1112. The region spanning 824 to 862 is the EGF-like 3; calcium-binding domain; that stretch reads DVNECATGFHRCGPNSVCVNLVGSYRCECRSGYEFADDQ. Residues 871–914 enclose the EGF-like 4 domain; that stretch reads PPNPCLDGSHTCAPEGQARCIHHGGSSFSCACLPGFIGTGHQCS. The EGF-like 5; calcium-binding domain maps to 915–953; sequence DVDECAENRCHEAAICYNTPGSFSCRCQPGYRGDGFHCT. A Cell attachment site motif is present at residues 946 to 948; sequence RGD. 2 consecutive Thyroglobulin type-1 domains span residues 965–1033 and 1044–1112; these read LKPC…PPHC and RTVC…RPAC. The segment at 1021–1043 is disordered; sequence GTQTPPGSTPPHCGPPPEPTQRP. Residues 1027 to 1040 are compositionally biased toward pro residues; it reads GSTPPHCGPPPEPT. N-linked (GlcNAc...) asparagine glycosylation is present at N1152. LDL-receptor class B repeat units lie at residues 1182 to 1225, 1226 to 1268, 1269 to 1313, 1314 to 1355, and 1357 to 1401; these read RMVY…DHFR, RTMY…DPIR, GNLY…DPFS, KLLC…YADH, and YHTD…CPTG. At R1336 the chain carries Omega-N-methylarginine.

Interacts with LAMA2. Interacts with COL13A1. Interacts with EFEMP2. Post-translationally, highly N- and O-glycosylated.

The protein localises to the secreted. It localises to the extracellular space. The protein resides in the extracellular matrix. Its subcellular location is the basement membrane. Functionally, cell adhesion glycoprotein. Might be involved in osteoblast differentiation. It probably has a role in cell-extracellular matrix interactions. The sequence is that of Nidogen-2 (Nid2) from Mus musculus (Mouse).